The chain runs to 1404 residues: DNA-directed RNA polymerase subunit beta' (1404 aa).

4 residues coordinate Zn(2+): Cys60, Cys62, Cys75, and Cys78. The Mg(2+) site is built by Asp449, Asp451, and Asp453. Zn(2+)-binding residues include Cys778, Cys852, Cys859, and Cys862. The tract at residues 1381–1404 is disordered; the sequence is DRPLEEEEEEEIPQSIADDSDGDE. The segment covering 1384–1404 has biased composition (acidic residues); it reads LEEEEEEEIPQSIADDSDGDE.

Belongs to the RNA polymerase beta' chain family. The RNAP catalytic core consists of 2 alpha, 1 beta, 1 beta' and 1 omega subunit. When a sigma factor is associated with the core the holoenzyme is formed, which can initiate transcription. Mg(2+) serves as cofactor. The cofactor is Zn(2+).

The catalysed reaction is RNA(n) + a ribonucleoside 5'-triphosphate = RNA(n+1) + diphosphate. In terms of biological role, DNA-dependent RNA polymerase catalyzes the transcription of DNA into RNA using the four ribonucleoside triphosphates as substrates. The chain is DNA-directed RNA polymerase subunit beta' from Leptospira borgpetersenii serovar Hardjo-bovis (strain JB197).